The sequence spans 574 residues: DNA-directed primase/polymerase protein (574 aa).

The stretch at lysine 2–asparagine 22 forms a coiled coil. Substrate is bound by residues arginine 76, aspartate 116–glutamate 118, lysine 167–histidine 171, arginine 291–arginine 294, and lysine 300. Mn(2+)-binding residues include aspartate 116 and glutamate 118. 4 residues coordinate Zn(2+): cysteine 424, histidine 431, cysteine 451, and cysteine 456. Positions cysteine 424–arginine 457 match the Zinc knuckle motif motif.

The protein belongs to the eukaryotic-type primase small subunit family. Requires Mn(2+) as cofactor.

The protein resides in the nucleus. It localises to the mitochondrion matrix. It is found in the chromosome. It carries out the reaction ssDNA + n NTP = ssDNA/pppN(pN)n-1 hybrid + (n-1) diphosphate.. The catalysed reaction is DNA(n) + a 2'-deoxyribonucleoside 5'-triphosphate = DNA(n+1) + diphosphate. Functionally, DNA primase and DNA polymerase required to tolerate replication-stalling lesions by bypassing them. Required to facilitate mitochondrial and nuclear replication fork progression by initiating de novo DNA synthesis using dNTPs and acting as an error-prone DNA polymerase able to bypass certain DNA lesions. Shows a high capacity to tolerate DNA damage lesions such as 8oxoG and abasic sites in DNA. Provides different translesion synthesis alternatives when DNA replication is stalled: able to synthesize DNA primers downstream of lesions, such as UV lesions, R-loops and G-quadruplexes, to allow DNA replication to continue. Can also realign primers ahead of 'unreadable lesions' such as abasic sites and 6-4 photoproduct (6-4 pyrimidine-pyrimidinone), thereby skipping the lesion. Repriming avoids fork degradation while leading to accumulation of internal ssDNA gaps behind the forks. Also able to incorporate nucleotides opposite DNA lesions such as 8oxoG, like a regular translesion synthesis DNA polymerase. Also required for reinitiating stalled forks after ultraviolet (UV) damage during nuclear DNA replication. Required for mitochondrial DNA (mtDNA) synthesis and replication, by reinitiating synthesis after UV damage or in the presence of chain-terminating nucleotides. In addition to its role in DNA damage response, also required to maintain efficient nuclear and mitochondrial DNA replication in unperturbed cells. The polypeptide is DNA-directed primase/polymerase protein (Gallus gallus (Chicken)).